The chain runs to 217 residues: Octanoyltransferase (217 aa).

Residues 31–206 (KSVMDEAWLL…ELVSRLGYAE (176 aa)) form the BPL/LPL catalytic domain. Substrate is bound by residues 70-77 (RGGQVTYH), 137-139 (SLG), and 150-152 (GLA). The active-site Acyl-thioester intermediate is the C168.

Belongs to the LipB family.

Its subcellular location is the cytoplasm. It catalyses the reaction octanoyl-[ACP] + L-lysyl-[protein] = N(6)-octanoyl-L-lysyl-[protein] + holo-[ACP] + H(+). It participates in protein modification; protein lipoylation via endogenous pathway; protein N(6)-(lipoyl)lysine from octanoyl-[acyl-carrier-protein]: step 1/2. Its function is as follows. Catalyzes the transfer of endogenously produced octanoic acid from octanoyl-acyl-carrier-protein onto the lipoyl domains of lipoate-dependent enzymes. Lipoyl-ACP can also act as a substrate although octanoyl-ACP is likely to be the physiological substrate. The polypeptide is Octanoyltransferase (Pseudomonas aeruginosa (strain UCBPP-PA14)).